The chain runs to 57 residues: Small hydrophobic protein (57 aa).

Topologically, residues 1–8 (MPAIQPPL) are virion surface. A helical membrane pass occupies residues 9–29 (YLTFLLLILLYRIITLYVWVV). Residues 30–57 (STITYKTAVRHAALYQRSLFRWSFDHSL) lie on the Intravirion side of the membrane.

Belongs to the rubulavirus small hydrophobic protein family. In terms of assembly, interacts with host TNFRSF1A, RIPK1 and IRAK1; these interactions interfere with host NF-kappa-B activation at the level of receptor complexes. Interacts with host protein UBQLN4.

The protein resides in the virion membrane. It localises to the host cell membrane. Plays a role in the inhibition of the host NF-kappa-B pathway. This inhibition occurs at the receptor level, by preventing the signaling of TNFR1 as well as IL-1R and TLR3. The sequence is that of Small hydrophobic protein (SH) from Mumps virus (strain Belfast) (MuV).